The chain runs to 151 residues: UPF0756 membrane protein GK2737 (151 aa).

Transmembrane regions (helical) follow at residues 5-25 (VLFL…SLIV), 53-73 (WGVT…EIGF), 79-99 (SLQS…ALIA), and 121-141 (ILAV…AGIA).

This sequence belongs to the UPF0756 family.

The protein localises to the cell membrane. The sequence is that of UPF0756 membrane protein GK2737 from Geobacillus kaustophilus (strain HTA426).